The chain runs to 335 residues: Phosphatidylglycerol--prolipoprotein diacylglyceryl transferase (335 aa).

The next 3 helical transmembrane spans lie at Ile31–Leu51, Tyr67–Gly87, and Leu100–Ile120. Arg163 serves as a coordination point for a 1,2-diacyl-sn-glycero-3-phospho-(1'-sn-glycerol). The next 3 helical transmembrane spans lie at Pro213–Leu233, Tyr235–Thr255, and Ser277–Leu297.

This sequence belongs to the Lgt family.

The protein resides in the cell membrane. The catalysed reaction is L-cysteinyl-[prolipoprotein] + a 1,2-diacyl-sn-glycero-3-phospho-(1'-sn-glycerol) = an S-1,2-diacyl-sn-glyceryl-L-cysteinyl-[prolipoprotein] + sn-glycerol 1-phosphate + H(+). The protein operates within protein modification; lipoprotein biosynthesis (diacylglyceryl transfer). Functionally, catalyzes the transfer of the diacylglyceryl group from phosphatidylglycerol to the sulfhydryl group of the N-terminal cysteine of a prolipoprotein, the first step in the formation of mature lipoproteins. The sequence is that of Phosphatidylglycerol--prolipoprotein diacylglyceryl transferase from Ureaplasma parvum serovar 3 (strain ATCC 27815 / 27 / NCTC 11736).